We begin with the raw amino-acid sequence, 927 residues long: Alpha-catenin-like protein hmp-1 (927 aa).

2 coiled-coil regions span residues 319–354 and 672–696; these read TREN…RRDD and QENQ…QIDI. A disordered region spans residues 901–927; that stretch reads RNEIETGRDSDDEELDRRHQQRINGRL.

This sequence belongs to the vinculin/alpha-catenin family. As to quaternary structure, component of a core catenin-cadherin complex consisting of hmr-1, hmp-1 and hmp-2; the complex localizes to adherens junctions. May interact with hmp-2. Epidermal cells.

Its subcellular location is the cell junction. The protein localises to the adherens junction. It localises to the cytoplasm. Its function is as follows. Required for cell migration during body enclosure and cell shape changes during body elongation. Required for proper localization of other junctional components, such as pac-1. This is Alpha-catenin-like protein hmp-1 (hmp-1) from Caenorhabditis elegans.